Consider the following 1336-residue polypeptide: Adhesion G protein-coupled receptor A2 (1336 aa).

The N-terminal stretch at 1 to 33 is a signal peptide; it reads MGAGGRRMPVPPARLLLLPLLPCLLLLAPGTRG. The Extracellular portion of the chain corresponds to 34-769; the sequence is APGCPVPIRG…AGGSGAGLHP (736 aa). Asn-84 and Asn-101 each carry an N-linked (GlcNAc...) asparagine glycan. 4 LRR repeats span residues 85 to 106, 109 to 130, 133 to 154, and 157 to 178; these read GTIT…SFLG, LLEK…AFLG, ELKR…TFQG, and RLLR…VFDE. The N-linked (GlcNAc...) asparagine glycan is linked to Asn-162. An LRRCT domain is found at 190-241; sequence EFLTCDCRLRWLLPWARNHSLQLSERTLCAYPSALHAHALSSLQESQLRCEG. Residues 247-344 enclose the Ig-like domain; that stretch reads THYLIPSLRQ…GNTSKKVEIV (98 aa). A disulfide bridge links Cys-268 with Cys-328. Asn-275 carries an N-linked (GlcNAc...) asparagine glycan. The RGD signature appears at 362 to 364; that stretch reads RGD. Positions 594 to 757 constitute a GAIN-B domain; the sequence is FRCTTGRPNI…AVLMELNAFP (164 aa). N-linked (GlcNAc...) asparagine glycans are attached at residues Asn-602, Asn-691, and Asn-735. A GPS region spans residues 711 to 757; sequence AAWWNQDGPGGWSSEGCRLRYSQPNVSSLYCQHLGNVAVLMELNAFP. A disulfide bond links Cys-727 and Cys-741. The chain crosses the membrane as a helical span at residues 770–790; sequence VVYPCTALLLLCLFSTIITYI. Residues 791 to 805 lie on the Cytoplasmic side of the membrane; the sequence is LNHSSIHVSRKGWHM. The helical transmembrane segment at 806–826 threads the bilayer; sequence LLNLCFHMAMTSAVFVGGVTL. At 827–830 the chain is on the extracellular side; it reads TNYQ. The chain crosses the membrane as a helical span at residues 831–851; it reads MVCQAVGITLHYSSLSSLLWM. Residues 852–884 lie on the Cytoplasmic side of the membrane; the sequence is GVKARVLHKELSWRAPPLEEGEAAPPGPRPMLR. A helical transmembrane segment spans residues 885–905; that stretch reads FYLIAGGIPLIICGITAAVNI. Residues 906 to 922 lie on the Extracellular side of the membrane; it reads HNYRDHSPYCWLVWRPS. A helical transmembrane segment spans residues 923 to 943; it reads LGAFYIPVALILPITWIYFLC. Residues 944–1016 are Cytoplasmic-facing; sequence AGLHLRSHVA…DGVYSPGVQL (73 aa). A helical transmembrane segment spans residues 1017–1037; sequence GALMTTHFLYLAMWACGALAV. At 1038–1044 the chain is on the extracellular side; that stretch reads SQRWLPR. Residues 1045–1065 traverse the membrane as a helical segment; the sequence is VVCSCLYGVAASALGLFVFTH. Over 1066–1336 the chain is Cytoplasmic; that stretch reads HCARRRDVRA…TGLWKSETTV (271 aa). Residues 1084 to 1095 show a composition bias toward low complexity; it reads ASPSASHVPARA. A disordered region spans residues 1084 to 1310; that stretch reads ASPSASHVPA…NGAPKGGKYE (227 aa). A Phosphoserine modification is found at Ser-1104. The segment covering 1110–1124 has biased composition (low complexity); the sequence is GPASLKSSPSGSSGR. Residues 1133 to 1143 are compositionally biased toward polar residues; that stretch reads TNLQVAQSQVC. Basic residues predominate over residues 1166-1186; that stretch reads PRHHNNLHHGRRVHKSRAKGH. Polar residues predominate over residues 1213–1234; it reads SSESGSLHNSPSDSYPGSSRNS. The PDZ-binding motif lies at 1333-1336; that stretch reads ETTV.

It belongs to the G-protein coupled receptor 2 family. Adhesion G-protein coupled receptor (ADGR) subfamily. In terms of assembly, interacts with RECK; the interaction is direct. Interacts (via PDZ-binding motif) with DLG1 (via PDZ domains). The cleaved extracellular subunit interacts with the integrin heterodimer ITGAV:ITGB3. In terms of processing, glycosylated. Proteolytically cleaved into two subunits, an extracellular subunit and a seven-transmembrane subunit. Cleaved by thrombin (F2) and MMP1. Also cleaved by MMP9, with lower efficiency. Presence of the protein disulfide-isomerase P4HB at the cell surface is additionally required for shedding of the extracellular subunit, suggesting that the subunits are linked by disulfide bonds. Shedding is enhanced by the growth factor FGF2 and may promote cell survival during angiogenesis. In terms of tissue distribution, abundantly expressed in the vasculature of the developing embryo. Expression in normal adult tissues is specifically vascular with endothelial expression in CNS, including brain and retina and more widespread pericyte expression in the brain and organs, including the kidney, pancreas and corpus luteum.

Its subcellular location is the cell membrane. The protein resides in the cell projection. It is found in the filopodium. Functionally, endothelial receptor which functions together with RECK to enable brain endothelial cells to selectively respond to Wnt7 signals (WNT7A or WNT7B). Plays a key role in Wnt7-specific responses, such as endothelial cell sprouting and migration in the forebrain and neural tube, and establishment of the blood-brain barrier. Acts as a Wnt7-specific coactivator of canonical Wnt signaling: required to deliver RECK-bound Wnt7 to frizzled by assembling a higher-order RECK-ADGRA2-Fzd-LRP5-LRP6 complex. ADGRA2-tethering function does not rely on its G-protein coupled receptor (GPCR) structure but instead on its combined capacity to interact with RECK extracellularly and recruit the Dishevelled scaffolding protein intracellularly. Binds to the glycosaminoglycans heparin, heparin sulfate, chondroitin sulfate and dermatan sulfate. This chain is Adhesion G protein-coupled receptor A2, found in Mus musculus (Mouse).